Here is a 187-residue protein sequence, read N- to C-terminus: NADH-quinone oxidoreductase subunit B (187 aa).

The [4Fe-4S] cluster site is built by Cys55, Cys56, Cys121, and Cys150.

The protein belongs to the complex I 20 kDa subunit family. As to quaternary structure, NDH-1 is composed of 14 different subunits. Subunits NuoB, C, D, E, F, and G constitute the peripheral sector of the complex. [4Fe-4S] cluster serves as cofactor.

Its subcellular location is the cell inner membrane. The catalysed reaction is a quinone + NADH + 5 H(+)(in) = a quinol + NAD(+) + 4 H(+)(out). In terms of biological role, NDH-1 shuttles electrons from NADH, via FMN and iron-sulfur (Fe-S) centers, to quinones in the respiratory chain. The immediate electron acceptor for the enzyme in this species is believed to be ubiquinone. Couples the redox reaction to proton translocation (for every two electrons transferred, four hydrogen ions are translocated across the cytoplasmic membrane), and thus conserves the redox energy in a proton gradient. The sequence is that of NADH-quinone oxidoreductase subunit B from Bdellovibrio bacteriovorus (strain ATCC 15356 / DSM 50701 / NCIMB 9529 / HD100).